The sequence spans 381 residues: Flap endonuclease 1 (381 aa).

Positions methionine 1–arginine 105 are N-domain. Aspartate 34 provides a ligand contact to Mg(2+). DNA-binding residues include arginine 47 and arginine 71. Residues aspartate 87, glutamate 156, glutamate 158, aspartate 177, and aspartate 179 each coordinate Mg(2+). Residues glutamate 120 to histidine 251 are I-domain. Glutamate 156 is a DNA binding site. 2 residues coordinate DNA: glycine 229 and aspartate 231. Aspartate 231 is a binding site for Mg(2+). Positions valine 339 to phenylalanine 347 are interaction with PCNA. The tract at residues alanine 360–arginine 381 is disordered. The span at lysine 365–arginine 381 shows a compositional bias: basic residues.

It belongs to the XPG/RAD2 endonuclease family. FEN1 subfamily. In terms of assembly, interacts with PCNA. Three molecules of FEN1 bind to one PCNA trimer with each molecule binding to one PCNA monomer. PCNA stimulates the nuclease activity without altering cleavage specificity. Mg(2+) is required as a cofactor. Post-translationally, phosphorylated. Phosphorylation upon DNA damage induces relocalization to the nuclear plasma.

It is found in the nucleus. The protein resides in the nucleolus. The protein localises to the nucleoplasm. It localises to the mitochondrion. Structure-specific nuclease with 5'-flap endonuclease and 5'-3' exonuclease activities involved in DNA replication and repair. During DNA replication, cleaves the 5'-overhanging flap structure that is generated by displacement synthesis when DNA polymerase encounters the 5'-end of a downstream Okazaki fragment. It enters the flap from the 5'-end and then tracks to cleave the flap base, leaving a nick for ligation. Also involved in the long patch base excision repair (LP-BER) pathway, by cleaving within the apurinic/apyrimidinic (AP) site-terminated flap. Acts as a genome stabilization factor that prevents flaps from equilibrating into structures that lead to duplications and deletions. Also possesses 5'-3' exonuclease activity on nicked or gapped double-stranded DNA, and exhibits RNase H activity. Also involved in replication and repair of rDNA and in repairing mitochondrial DNA. The polypeptide is Flap endonuclease 1 (Kluyveromyces lactis (strain ATCC 8585 / CBS 2359 / DSM 70799 / NBRC 1267 / NRRL Y-1140 / WM37) (Yeast)).